Consider the following 141-residue polypeptide: MRQRTIVCPLIQNDGAYLLCKMADDRGVFPGQWALSGGGVEPGERIEEALRREIREELGEQLLLTEITPWTFSDDIRTKTYADGRKEEIYMIYLTFDCVSANREVKINEEFQDYAWVKPEDLVHYDLNVATRKTLRLKGLL.

The Nudix hydrolase domain maps to 1-141 (MRQRTIVCPL…RKTLRLKGLL (141 aa)). The Nudix box signature appears at 38–59 (GGVEPGERIEEALRREIREELG).

It belongs to the Nudix hydrolase family. NudI subfamily. As to quaternary structure, monomer. Mg(2+) serves as cofactor.

The enzyme catalyses a ribonucleoside 5'-triphosphate + H2O = a ribonucleoside 5'-phosphate + diphosphate + H(+). It carries out the reaction a 2'-deoxyribonucleoside 5'-triphosphate + H2O = a 2'-deoxyribonucleoside 5'-phosphate + diphosphate + H(+). The catalysed reaction is dUTP + H2O = dUMP + diphosphate + H(+). It catalyses the reaction dTTP + H2O = dTMP + diphosphate + H(+). The enzyme catalyses dCTP + H2O = dCMP + diphosphate + H(+). Its function is as follows. Catalyzes the hydrolysis of nucleoside triphosphates, with a preference for pyrimidine deoxynucleoside triphosphates (dUTP, dTTP and dCTP). This chain is Nucleoside triphosphatase NudI, found in Escherichia coli O17:K52:H18 (strain UMN026 / ExPEC).